The sequence spans 86 residues: Small ribosomal subunit protein bS18 (86 aa).

Belongs to the bacterial ribosomal protein bS18 family. As to quaternary structure, part of the 30S ribosomal subunit. Forms a tight heterodimer with protein bS6.

Binds as a heterodimer with protein bS6 to the central domain of the 16S rRNA, where it helps stabilize the platform of the 30S subunit. In Campylobacter fetus subsp. fetus (strain 82-40), this protein is Small ribosomal subunit protein bS18.